The chain runs to 151 residues: UPF0735 ACT domain-containing protein SSP1116 (151 aa).

Residues 74-149 (TLILYVNDIV…HVSKVELISM (76 aa)) form the ACT domain.

It belongs to the UPF0735 family.

The sequence is that of UPF0735 ACT domain-containing protein SSP1116 from Staphylococcus saprophyticus subsp. saprophyticus (strain ATCC 15305 / DSM 20229 / NCIMB 8711 / NCTC 7292 / S-41).